The sequence spans 439 residues: Xylose isomerase (439 aa).

Catalysis depends on residues H101 and D104. E232, E268, H271, D296, D307, D309, and D339 together coordinate Mg(2+).

Belongs to the xylose isomerase family. As to quaternary structure, homotetramer. Mg(2+) serves as cofactor.

The protein resides in the cytoplasm. It catalyses the reaction alpha-D-xylose = alpha-D-xylulofuranose. The chain is Xylose isomerase from Haemophilus influenzae (strain 86-028NP).